The following is a 273-amino-acid chain: Homeobox protein Hox-C13b (273 aa).

The homeobox DNA-binding region spans G201–V260.

The protein belongs to the Abd-B homeobox family.

It is found in the nucleus. In terms of biological role, sequence-specific transcription factor which is part of a developmental regulatory system that provides cells with specific positional identities on the anterior-posterior axis. Plays a role in early embryonic development. The chain is Homeobox protein Hox-C13b (hoxc13b) from Danio rerio (Zebrafish).